The following is a 77-amino-acid chain: Acyl carrier protein (77 aa).

Residues 2 to 77 (SDIADRVKKI…DAVKFISDAS (76 aa)) form the Carrier domain. O-(pantetheine 4'-phosphoryl)serine is present on S37.

The protein belongs to the acyl carrier protein (ACP) family. 4'-phosphopantetheine is transferred from CoA to a specific serine of apo-ACP by AcpS. This modification is essential for activity because fatty acids are bound in thioester linkage to the sulfhydryl of the prosthetic group.

Its subcellular location is the cytoplasm. The protein operates within lipid metabolism; fatty acid biosynthesis. In terms of biological role, carrier of the growing fatty acid chain in fatty acid biosynthesis. The sequence is that of Acyl carrier protein from Roseobacter denitrificans (strain ATCC 33942 / OCh 114) (Erythrobacter sp. (strain OCh 114)).